Consider the following 514-residue polypeptide: MAESQPLSVAPEGAEYLRAVLRAPVYEAAQVTPLQKMEKLSSRLDNVILVKREDRQPVHSFKLRGAYAMMAGLTEEQKAHGVITASAGNHAQGVAFSSARLGVKSLIVMPKATADIKVDAVRGFGGEVLLHGANFDEAKAKAIELAQQQGFTWVPPFDHPMVIAGQGTLALELLQQDSHLDRVFVPVGGGGLAAGVAVLIKQLMPQIKVIAVEAEDSACLKAALEAGHPVDLPRVGLFAEGVAVKRIGDETFRLCQEYLDDIITVDSDAICAAMKDLFEDVRAVAEPSGALALAGMKKYIAQHNIRGERLAHVLSGANVNFHGLRYVSERCELGEQREALLAVTIPEEKGSFLKFCQLLGGRMVTEFNYRFADAKNACIFVGVRVSQGLEERKEIITQLCDGGYSVVDLSDDEMAKLHVRYMVGGRPSKPLQERLYSFEFPESPGALLKFLHTLGTHWNISLFHYRSHGTDYGRVLAAFELGDHEPDFETRLHELGYECHDESNNPAFRFFLAG.

An N6-(pyridoxal phosphate)lysine modification is found at K62. Pyridoxal 5'-phosphate-binding positions include N89, 188-192, and S315; that span reads GGGGL. ACT-like domains lie at 339–411 and 434–504; these read ALLA…DLSD and RLYS…DESN.

Belongs to the serine/threonine dehydratase family. In terms of assembly, homotetramer. Pyridoxal 5'-phosphate serves as cofactor.

It carries out the reaction L-threonine = 2-oxobutanoate + NH4(+). The protein operates within amino-acid biosynthesis; L-isoleucine biosynthesis; 2-oxobutanoate from L-threonine: step 1/1. With respect to regulation, isoleucine allosterically inhibits whereas valine allosterically activates this enzyme. Functionally, catalyzes the anaerobic formation of alpha-ketobutyrate and ammonia from threonine in a two-step reaction. The first step involved a dehydration of threonine and a production of enamine intermediates (aminocrotonate), which tautomerizes to its imine form (iminobutyrate). Both intermediates are unstable and short-lived. The second step is the nonenzymatic hydrolysis of the enamine/imine intermediates to form 2-ketobutyrate and free ammonia. In the low water environment of the cell, the second step is accelerated by RidA. The protein is L-Threonine dehydratase biosynthetic IlvA (ilvA) of Salmonella typhimurium (strain LT2 / SGSC1412 / ATCC 700720).